A 299-amino-acid polypeptide reads, in one-letter code: Ribosomal protein L11 methyltransferase (299 aa).

S-adenosyl-L-methionine is bound by residues Thr150, Gly171, Asp193, and Asn234.

Belongs to the methyltransferase superfamily. PrmA family.

The protein resides in the cytoplasm. It carries out the reaction L-lysyl-[protein] + 3 S-adenosyl-L-methionine = N(6),N(6),N(6)-trimethyl-L-lysyl-[protein] + 3 S-adenosyl-L-homocysteine + 3 H(+). Its function is as follows. Methylates ribosomal protein L11. In Dictyoglomus turgidum (strain DSM 6724 / Z-1310), this protein is Ribosomal protein L11 methyltransferase.